The sequence spans 319 residues: tRNA uridine(34) hydroxylase (319 aa).

A Rhodanese domain is found at 127–221 (KQEDTVIIDA…YGKDPEVQGE (95 aa)). The Cysteine persulfide intermediate role is filled by C181.

This sequence belongs to the TrhO family.

It catalyses the reaction uridine(34) in tRNA + AH2 + O2 = 5-hydroxyuridine(34) in tRNA + A + H2O. Its function is as follows. Catalyzes oxygen-dependent 5-hydroxyuridine (ho5U) modification at position 34 in tRNAs. This chain is tRNA uridine(34) hydroxylase, found in Bacillus cereus (strain Q1).